Reading from the N-terminus, the 74-residue chain is MSAGTKASELRELGNEELLAKLREAKEELFNLRFQAATGQLENHGRLKAVRKDIARIYTLMRERELGIETVESA.

This sequence belongs to the universal ribosomal protein uL29 family.

This chain is Large ribosomal subunit protein uL29 (rpmC), found in Streptomyces coelicolor (strain ATCC BAA-471 / A3(2) / M145).